A 333-amino-acid chain; its full sequence is Fibronectin type III domain-containing protein 11 (333 aa).

One can recognise a Fibronectin type-III domain in the interval 212–310 (PVMFDRKESV…DSLTLHTRPG (99 aa)). Residues 307 to 333 (TRPGPPEGLAPSRLGKLGLSLTTPSER) are disordered.

The polypeptide is Fibronectin type III domain-containing protein 11 (Bos taurus (Bovine)).